A 300-amino-acid chain; its full sequence is Ribosome-inactivating protein 3 (300 aa).

Glu-207 is an active-site residue.

This sequence belongs to the ribosome-inactivating protein family. Type 1 RIP subfamily. In terms of assembly, monomer. As to expression, accumulates to high levels in seeds.

It localises to the cytoplasm. It carries out the reaction Endohydrolysis of the N-glycosidic bond at one specific adenosine on the 28S rRNA.. Functionally, possesses features of some constitutive defense agent. The coordinate Opaque-2-controlled synthesis of this protein and the major seed storage proteins (zeins) may provide the germinating seedling with both nutritional benefits and protection against pathogen invasion of the surrounding endosperm. The sequence is that of Ribosome-inactivating protein 3 (CRIP3) from Zea mays (Maize).